The primary structure comprises 1141 residues: Isoleucine--tRNA ligase, cytoplasmic (1141 aa).

A 'HIGH' region motif is present at residues 50-60 (PFATGLPHYGH). A 'KMSKS' region motif is present at residues 601–605 (KMSKS). Lys604 contributes to the ATP binding site.

Belongs to the class-I aminoacyl-tRNA synthetase family.

The protein localises to the cytoplasm. It catalyses the reaction tRNA(Ile) + L-isoleucine + ATP = L-isoleucyl-tRNA(Ile) + AMP + diphosphate. The polypeptide is Isoleucine--tRNA ligase, cytoplasmic (Caenorhabditis elegans).